Consider the following 469-residue polypeptide: uncharacterized protein (469 aa).

3 helical membrane passes run 42-62 (DVIIFLLLFFVAFNVSSAYVI), 179-199 (IVLPPGAVILSPQGTLLVTPS), and 249-269 (NLKYLLIIAIFGTAIFGGLFV).

It is found in the cell membrane. This is an uncharacterized protein from Methanocaldococcus jannaschii (strain ATCC 43067 / DSM 2661 / JAL-1 / JCM 10045 / NBRC 100440) (Methanococcus jannaschii).